A 33-amino-acid polypeptide reads, in one-letter code: Imperacalcin (33 aa).

Disulfide bonds link Cys3–Cys17, Cys10–Cys21, and Cys16–Cys32. Important for stimulation of [3H]ryanodine binding to RYR1 regions lie at residues 8 to 9 (KR) and 19 to 20 (KK). Positions 22–24 (KRR) are essential for stimulation of [3H]ryanodine binding to RYR1. The important for stimulation of [3H]ryanodine binding to RYR1 stretch occupies residues 25–27 (GTN).

It belongs to the scorpion calcin family. Expressed by the venom gland.

It is found in the secreted. Functionally, this toxin affects the activity of ryanodine receptors 1, 2 and 3 (RyR1, RyR2 and RyR3). At lower concentrations the toxin increases full openings of the RyRs, and at higher concentrations it inhibits full openings and induces openings to subconductance levels (30% of the full conductance state) and reduces the number of full conductance openings. The different actions may be attributed to the toxins binding at different sites on the RyRs, with binding at a high-affinity site mediating the increase in full openings and the induction of subconductance states evoked upon binding to a lower-affinity site. Furthermore, it triggers calcium release from sarcoplasmic vesicles (11.7 nM are enough to induce a sharp release, and 70% of the total calcium is released after toxin (100 nM) addition) probably by acting as a cell-penetrating peptide (CPP). In addition, it has been shown to dose-dependently stimulate ryanodine binding to RyR1 (EC(50)=8.7 nM). It also augments the bell-shaped calcium-[3H]ryanodine binding curve that is maximal at about 10 uM calcium concentration. It binds a different site as ryanodine. It acts synergistically with caffeine. In vivo, intracerebroventricular injection into mice induces neurotoxic symptoms, followed by death. This Pandinus imperator (Emperor scorpion) protein is Imperacalcin.